A 432-amino-acid polypeptide reads, in one-letter code: Cyclic GMP-AMP synthase (432 aa).

Residue 110–115 coordinates GTP; that stretch reads QGSFQY. Residues D129 and D131 each contribute to the Mg(2+) site. R180 is an ATP binding site. D191 provides a ligand contact to Mg(2+). S255 provides a ligand contact to ATP. K283, S297, and D344 together coordinate GTP. G432 is covalently cross-linked (Glycyl cysteine dithioester (Gly-Cys) (interchain with C-13 in Cap2)). A Glycyl cysteine dithioester (Gly-Cys) (interchain with C-493 in Cap2) cross-link involves residue G432. G432 is covalently cross-linked (Glycyl cysteine dithioester (Gly-Cys) (interchain with C-513 in Cap2)). A Glycyl lysine isopeptide (Gly-Lys) (interchain with K-? in acceptor proteins) cross-link involves residue G432.

It belongs to the CD-NTase family. A02 subfamily. As to quaternary structure, a Cap2 dimer is bound on either side by a DncV monomer. Mg(2+) is required as a cofactor. In bacteria expressing capV-dncV-cap2-cap3, this protein is conjugated to about 130 cellular proteins by Cap2, most of which are involved in metabolism; more conjugated protein is found in the absence of Cap3. Most conjugation occurs via an isopeptide bond with the epsilon-amine of Lys on the target protein, but Cys-conjugation also occurs, including to Cap2. Conjugation or deconjugation from cellular proteins does not change the DncV activity in vitro, but does so in vivo during infection. In terms of processing, (Microbial infection) During phage T4 infection is conjugated to at least 2 T4 proteins (fibritin (wac) and dexA.2).

The catalysed reaction is GTP + ATP = 3',3'-cGAMP + 2 diphosphate. With respect to regulation, primed for activation by Cap2 which conjugates it to cellular proteins. cGAMP production is induced in phage T4 infected cells in a manner that requires Cap2 and Cap3, as well as a C-terminal Ala or Gly residue in this protein. Its function is as follows. Cyclic nucleotide synthase (second messenger synthase) of a CBASS antivirus system. CBASS (cyclic oligonucleotide-based antiphage signaling system) provides immunity against bacteriophages. The CD-NTase protein (DncV, this protein) synthesizes cyclic nucleotides in response to infection; these serve as specific second messenger signals. The signals activate a diverse range of effectors, leading to bacterial cell death and thus abortive phage infection. A type II-A(GA) CBASS system. Functionally, catalyzes the synthesis of 3',3'-cyclic GMP-AMP (cGAMP) from GTP and ATP, a second messenger in cell signal transduction. Its product controls the activity of cGAMP-activated phospholipase CapV, a patatin-like lipase that is a direct cGAMP receptor encoded in the dncV operon. In terms of biological role, protects E.coli against phage infection. When capV and dncV are introduced in E.coli MG1655 there is 1000-fold protection against phage P1; protection against other phage (T2, T4, T5, T6 and lambda-vir) requires the 2 subsequent genes (cap2 and cap3). In another paper the capV-dncV-cap2-cap3 operon gives 10(4)-10(5)-fold protection against phages lambda, T2, T4 and T6, about 1000-fold protection against P1 and 10-fold protection against T5. The sequence is that of Cyclic GMP-AMP synthase from Escherichia coli (strain TW11681).